Reading from the N-terminus, the 283-residue chain is Pantothenate synthetase (283 aa).

26 to 33 (MGNLHEGH) contacts ATP. His33 acts as the Proton donor in catalysis. Residue Gln57 coordinates (R)-pantoate. Gln57 contacts beta-alanine. Position 144–147 (144–147 (GKKD)) interacts with ATP. A (R)-pantoate-binding site is contributed by Gln150. ATP contacts are provided by residues Val173 and 181-184 (LSSR).

Belongs to the pantothenate synthetase family. As to quaternary structure, homodimer.

The protein localises to the cytoplasm. The catalysed reaction is (R)-pantoate + beta-alanine + ATP = (R)-pantothenate + AMP + diphosphate + H(+). Its pathway is cofactor biosynthesis; (R)-pantothenate biosynthesis; (R)-pantothenate from (R)-pantoate and beta-alanine: step 1/1. Functionally, catalyzes the condensation of pantoate with beta-alanine in an ATP-dependent reaction via a pantoyl-adenylate intermediate. This chain is Pantothenate synthetase, found in Ralstonia nicotianae (strain ATCC BAA-1114 / GMI1000) (Ralstonia solanacearum).